Reading from the N-terminus, the 364-residue chain is Cyclin-D3-2 (364 aa).

The tract at residues 331-364 (PPGRPIKRGAAAATTADPLPADEESRDAWPPYAA) is disordered. Low complexity predominate over residues 340-349 (AAAATTADPL).

It belongs to the cyclin family. Cyclin D subfamily.

The protein is Cyclin-D3-2 (CYCD3-2) of Oryza sativa subsp. japonica (Rice).